We begin with the raw amino-acid sequence, 209 residues long: Thymidylate kinase (209 aa).

10–17 (GLDGAGKS) contributes to the ATP binding site.

Belongs to the thymidylate kinase family.

It catalyses the reaction dTMP + ATP = dTDP + ADP. Its function is as follows. Phosphorylation of dTMP to form dTDP in both de novo and salvage pathways of dTTP synthesis. This Francisella tularensis subsp. holarctica (strain FTNF002-00 / FTA) protein is Thymidylate kinase.